The chain runs to 254 residues: Phosphatidylglycerol--prolipoprotein diacylglyceryl transferase (254 aa).

3 helical membrane passes run 11 to 31, 49 to 69, and 84 to 104; these read LAIR…LLLA, FLIA…IFEF, and QGGL…YIYL. Arginine 130 provides a ligand contact to a 1,2-diacyl-sn-glycero-3-phospho-(1'-sn-glycerol). 3 helical membrane passes run 169 to 189, 196 to 216, and 228 to 248; these read PTFL…VYLL, GIVF…IEGL, and VAQL…YNII.

It belongs to the Lgt family.

Its subcellular location is the cell membrane. The enzyme catalyses L-cysteinyl-[prolipoprotein] + a 1,2-diacyl-sn-glycero-3-phospho-(1'-sn-glycerol) = an S-1,2-diacyl-sn-glyceryl-L-cysteinyl-[prolipoprotein] + sn-glycerol 1-phosphate + H(+). Its pathway is protein modification; lipoprotein biosynthesis (diacylglyceryl transfer). Catalyzes the transfer of the diacylglyceryl group from phosphatidylglycerol to the sulfhydryl group of the N-terminal cysteine of a prolipoprotein, the first step in the formation of mature lipoproteins. The polypeptide is Phosphatidylglycerol--prolipoprotein diacylglyceryl transferase (Clostridium botulinum (strain Loch Maree / Type A3)).